The sequence spans 816 residues: Sucrose synthase 2 (816 aa).

S15 is subject to Phosphoserine. The interval 280 to 757 (MVFNVVILSP…GLQRIEEKYT (478 aa)) is GT-B glycosyltransferase.

It belongs to the glycosyltransferase 1 family. Plant sucrose synthase subfamily.

It carries out the reaction an NDP-alpha-D-glucose + D-fructose = a ribonucleoside 5'-diphosphate + sucrose + H(+). Its function is as follows. Sucrose-cleaving enzyme that provides UDP-glucose and fructose for various metabolic pathways. In Zea mays (Maize), this protein is Sucrose synthase 2 (SUS1).